Reading from the N-terminus, the 455-residue chain is Argininosuccinate lyase (455 aa).

This sequence belongs to the lyase 1 family. Argininosuccinate lyase subfamily.

The protein localises to the cytoplasm. It catalyses the reaction 2-(N(omega)-L-arginino)succinate = fumarate + L-arginine. The protein operates within amino-acid biosynthesis; L-arginine biosynthesis; L-arginine from L-ornithine and carbamoyl phosphate: step 3/3. The sequence is that of Argininosuccinate lyase from Shewanella oneidensis (strain ATCC 700550 / JCM 31522 / CIP 106686 / LMG 19005 / NCIMB 14063 / MR-1).